The chain runs to 76 residues: MMKLSVSFLLLLMLLPFITGEENSDSDVLKSGAAVRQGRGRCRGFREDCSQHRDCCGDLCCNGNTCVITVIACPKW.

An N-terminal signal peptide occupies residues 1-20 (MMKLSVSFLLLLMLLPFITG). Residues 21–39 (EENSDSDVLKSGAAVRQGR) constitute a propeptide that is removed on maturation. Disulfide bonds link Cys-42–Cys-56, Cys-49–Cys-61, Cys-55–Cys-66, and Cys-60–Cys-73.

In terms of tissue distribution, expressed by the venom duct.

It localises to the secreted. Its function is as follows. Antimicrobial peptide that potently inhibits growth of Mycobacterium tuberculosis (H37Rv strain) (MIC=3 uM). This is Conopeptide X11.1 from Conasprella ximenes (Interrupted cone).